A 215-amino-acid chain; its full sequence is Urease accessory protein UreE (215 aa).

A disordered region spans residues 134–215 (FDPEGGAYAP…HGHSHKHDHK (82 aa)). Over residues 164–206 (GHHDHADHEHDHKHDHGKHDHAGHDHAHDHHVHDEHCGHDHGH) the composition is skewed to basic and acidic residues.

This sequence belongs to the UreE family.

It is found in the cytoplasm. In terms of biological role, involved in urease metallocenter assembly. Binds nickel. Probably functions as a nickel donor during metallocenter assembly. The sequence is that of Urease accessory protein UreE from Rhodopseudomonas palustris (strain HaA2).